Consider the following 303-residue polypeptide: N-acetyl-D-glucosamine kinase (303 aa).

Residues 4–11 and 133–140 contribute to the ATP site; these read GFDIGGTK and GVGGGLVL. The Zn(2+) site is built by His-157, Cys-177, Cys-179, and Cys-184.

It belongs to the ROK (NagC/XylR) family. NagK subfamily.

It carries out the reaction N-acetyl-D-glucosamine + ATP = N-acetyl-D-glucosamine 6-phosphate + ADP + H(+). Its pathway is cell wall biogenesis; peptidoglycan recycling. Functionally, catalyzes the phosphorylation of N-acetyl-D-glucosamine (GlcNAc) derived from cell-wall degradation, yielding GlcNAc-6-P. This Salmonella arizonae (strain ATCC BAA-731 / CDC346-86 / RSK2980) protein is N-acetyl-D-glucosamine kinase.